The chain runs to 119 residues: Large ribosomal subunit protein bL20 (119 aa).

Belongs to the bacterial ribosomal protein bL20 family.

Functionally, binds directly to 23S ribosomal RNA and is necessary for the in vitro assembly process of the 50S ribosomal subunit. It is not involved in the protein synthesizing functions of that subunit. The polypeptide is Large ribosomal subunit protein bL20 (Ruthia magnifica subsp. Calyptogena magnifica).